A 291-amino-acid polypeptide reads, in one-letter code: MTFQELITNLTDFWIKQGCILAQPYDVEVGAGTMNPNTFFRVLGPEPWRVVYVEPSRRPADGRYGENPNRLYMHHQMQVILKPAPFNVQDLYLQSLEAIGISLSEHDVRFVEDNWESPTLGAWGIGWEVWLDGMEITQFTYFQQAGGYDLSVVPAELTYGLERIAMYLQRVENVFDLKWSEDITYGEMRKTEEYQHCVYAFEESDVNKLRSWFDSYEDEAMRLIDKGLTLPAYDYVLKCSHTFNLLDARGGFSAAERSSYVLRIRKLSSRIAKQWLKEREEKEFPLMGRWN.

This sequence belongs to the class-II aminoacyl-tRNA synthetase family. Tetramer of two alpha and two beta subunits.

The protein resides in the cytoplasm. The enzyme catalyses tRNA(Gly) + glycine + ATP = glycyl-tRNA(Gly) + AMP + diphosphate. The protein is Glycine--tRNA ligase alpha subunit of Coprothermobacter proteolyticus (strain ATCC 35245 / DSM 5265 / OCM 4 / BT).